Here is a 134-residue protein sequence, read N- to C-terminus: Arginine decarboxylase proenzyme (134 aa).

The Schiff-base intermediate with substrate; via pyruvic acid role is filled by Ser-82. Ser-82 carries the pyruvic acid (Ser); by autocatalysis modification. His-87 acts as the Proton acceptor; for processing activity in catalysis. The Proton donor; for catalytic activity role is filled by Cys-102.

Belongs to the prokaryotic AdoMetDC family. Type 1 subfamily. As to quaternary structure, heterooctamer of four alpha and four beta chains arranged as a tetramer of alpha/beta heterodimers. It depends on pyruvate as a cofactor. Is synthesized initially as an inactive proenzyme. Formation of the active enzyme involves a self-maturation process in which the active site pyruvoyl group is generated from an internal serine residue via an autocatalytic post-translational modification. Two non-identical subunits are generated from the proenzyme in this reaction, and the pyruvate is formed at the N-terminus of the alpha chain, which is derived from the carboxyl end of the proenzyme. The post-translation cleavage follows an unusual pathway, termed non-hydrolytic serinolysis, in which the side chain hydroxyl group of the serine supplies its oxygen atom to form the C-terminus of the beta chain, while the remainder of the serine residue undergoes an oxidative deamination to produce ammonia and the pyruvoyl group blocking the N-terminus of the alpha chain.

It catalyses the reaction L-arginine + H(+) = agmatine + CO2. It participates in amine and polyamine biosynthesis; agmatine biosynthesis; agmatine from L-arginine: step 1/1. Highly competitively inhibited by L-argininamide and L-arginine methyl ester. Also inhibited by alpha-difluoromethylarginine. Is not stimulated by potassium chloride as observed for other decarboxylases. Functionally, specifically catalyzes the decarboxylation of L-arginine to agmatine. Is also able to decarboxylate L-canavanine, although less efficiently. Has no S-adenosylmethionine decarboxylase (AdoMetDC) activity. This is Arginine decarboxylase proenzyme from Saccharolobus solfataricus (strain ATCC 35092 / DSM 1617 / JCM 11322 / P2) (Sulfolobus solfataricus).